We begin with the raw amino-acid sequence, 828 residues long: Periplasmic nitrate reductase (828 aa).

Residues 1–31 (MKLSRRSFMKANAVAAAAAAAGLSVPGVARA) constitute a signal peptide (tat-type signal). The 57-residue stretch at 39–95 (IKWDKAPCRFCGTGCGVLVGTQQGRVVACQGDPDAPVNRGLNCIKGYFLPKIMYGKD) folds into the 4Fe-4S Mo/W bis-MGD-type domain. [4Fe-4S] cluster is bound by residues Cys46, Cys49, Cys53, and Cys81. Residues Lys83, Gln150, Asn175, Cys179, 212-219 (WGANMAEM), 243-247 (STYQH), 262-264 (QSD), Met372, Gln376, Asn482, 508-509 (SD), Lys531, Asp558, and 718-727 (TGRVLEHWHT) each bind Mo-bis(molybdopterin guanine dinucleotide). Phe794 is a substrate binding site. Positions 802 and 819 each coordinate Mo-bis(molybdopterin guanine dinucleotide).

Belongs to the prokaryotic molybdopterin-containing oxidoreductase family. NasA/NapA/NarB subfamily. In terms of assembly, component of the periplasmic nitrate reductase NapAB complex composed of NapA and NapB. [4Fe-4S] cluster is required as a cofactor. It depends on Mo-bis(molybdopterin guanine dinucleotide) as a cofactor. Predicted to be exported by the Tat system. The position of the signal peptide cleavage has not been experimentally proven.

Its subcellular location is the periplasm. It carries out the reaction 2 Fe(II)-[cytochrome] + nitrate + 2 H(+) = 2 Fe(III)-[cytochrome] + nitrite + H2O. Its function is as follows. Catalytic subunit of the periplasmic nitrate reductase complex NapAB. Receives electrons from NapB and catalyzes the reduction of nitrate to nitrite. This is Periplasmic nitrate reductase from Shigella boydii serotype 18 (strain CDC 3083-94 / BS512).